Consider the following 337-residue polypeptide: Ferrochelatase (337 aa).

The Fe cation site is built by His189 and Glu293.

It belongs to the ferrochelatase family.

Its subcellular location is the cytoplasm. It carries out the reaction heme b + 2 H(+) = protoporphyrin IX + Fe(2+). Its pathway is porphyrin-containing compound metabolism; protoheme biosynthesis; protoheme from protoporphyrin-IX: step 1/1. Its function is as follows. Catalyzes the ferrous insertion into protoporphyrin IX. This chain is Ferrochelatase, found in Pseudomonas entomophila (strain L48).